We begin with the raw amino-acid sequence, 20 residues long: Cytochrome c oxidase subunit 7B-liver, mitochondrial (20 aa).

This sequence belongs to the cytochrome c oxidase VIIb family. As to quaternary structure, component of the cytochrome c oxidase (complex IV, CIV), a multisubunit enzyme composed of 14 subunits. The complex is composed of a catalytic core of 3 subunits MT-CO1, MT-CO2 and MT-CO3, encoded in the mitochondrial DNA, and 11 supernumerary subunits COX4I, COX5A, COX5B, COX6A, COX6B, COX6C, COX7A, COX7B, COX7C, COX8 and NDUFA4, which are encoded in the nuclear genome. The complex exists as a monomer or a dimer and forms supercomplexes (SCs) in the inner mitochondrial membrane with NADH-ubiquinone oxidoreductase (complex I, CI) and ubiquinol-cytochrome c oxidoreductase (cytochrome b-c1 complex, complex III, CIII), resulting in different assemblies (supercomplex SCI(1)III(2)IV(1) and megacomplex MCI(2)III(2)IV(2)).

It localises to the mitochondrion inner membrane. The enzyme catalyses 4 Fe(II)-[cytochrome c] + O2 + 8 H(+)(in) = 4 Fe(III)-[cytochrome c] + 2 H2O + 4 H(+)(out). It functions in the pathway energy metabolism; oxidative phosphorylation. Its function is as follows. Component of the cytochrome c oxidase, the last enzyme in the mitochondrial electron transport chain which drives oxidative phosphorylation. The respiratory chain contains 3 multisubunit complexes succinate dehydrogenase (complex II, CII), ubiquinol-cytochrome c oxidoreductase (cytochrome b-c1 complex, complex III, CIII) and cytochrome c oxidase (complex IV, CIV), that cooperate to transfer electrons derived from NADH and succinate to molecular oxygen, creating an electrochemical gradient over the inner membrane that drives transmembrane transport and the ATP synthase. Cytochrome c oxidase is the component of the respiratory chain that catalyzes the reduction of oxygen to water. Electrons originating from reduced cytochrome c in the intermembrane space (IMS) are transferred via the dinuclear copper A center (CU(A)) of subunit 2 and heme A of subunit 1 to the active site in subunit 1, a binuclear center (BNC) formed by heme A3 and copper B (CU(B)). The BNC reduces molecular oxygen to 2 water molecules using 4 electrons from cytochrome c in the IMS and 4 protons from the mitochondrial matrix. The sequence is that of Cytochrome c oxidase subunit 7B-liver, mitochondrial from Thunnus obesus (Bigeye tuna).